Reading from the N-terminus, the 593-residue chain is Actin-histidine N-methyltransferase (593 aa).

The disordered stretch occupies residues 1–21 (MGKKSRVKTQKSGTGATAAVS). Residues Arg75, 104 to 106 (EGF), Arg254, 275 to 279 (DMCNH), and 325 to 327 (SGF) each bind S-adenosyl-L-methionine. Residues 94 to 314 (EGFEIANFEE…AGEQIYIFYG (221 aa)) enclose the SET domain. Positions 549–593 (GFVNGENSLFNGTKSESENLIKEESNRETEDAKESSSESTDEVKE) are disordered. Residues 553 to 562 (GENSLFNGTK) are compositionally biased toward polar residues. A compositionally biased stretch (basic and acidic residues) spans 563–593 (SESENLIKEESNRETEDAKESSSESTDEVKE).

The protein belongs to the class V-like SAM-binding methyltransferase superfamily. SETD3 actin-histidine methyltransferase family.

The protein localises to the cytoplasm. The catalysed reaction is L-histidyl-[protein] + S-adenosyl-L-methionine = N(tele)-methyl-L-histidyl-[protein] + S-adenosyl-L-homocysteine + H(+). Functionally, protein-histidine N-methyltransferase that specifically mediates 3-methylhistidine (tele-methylhistidine) methylation of actin at 'His-73'. Does not have protein-lysine N-methyltransferase activity and probably only catalyzes histidine methylation of actin. The protein is Actin-histidine N-methyltransferase of Gallus gallus (Chicken).